The primary structure comprises 469 residues: Reticulon-2 (469 aa).

Disordered stretches follow at residues 1–180 (MGQV…EASE) and 201–238 (LTPQLSPSSGIPQAHTPSPQRSQDLNTGPDEPLPNGEG). Residues 14–25 (APSTASSTPDST) are compositionally biased toward low complexity. Positions 32-43 (SDFRELHTAREF) are enriched in basic and acidic residues. S44 bears the Phosphoserine mark. Over residues 135–144 (RPLEELRLRL) the composition is skewed to basic and acidic residues. Polar residues-rich tracts occupy residues 159-168 (DSATSSSTPL) and 203-226 (PQLSPSSGIPQAHTPSPQRSQDLN). Residues 270–469 (VADLLYWKDT…SVSGSKAKAE (200 aa)) enclose the Reticulon domain. A run of 2 helical transmembrane segments spans residues 293–313 (LLCLLHFSIVSVAAHLALLGL) and 388–408 (LLFYILTFVGAIFNGLTLVIL).

As to quaternary structure, interacts with SPAST. Interacts with BACE1. Interacts (via first transmembrane domain) with ARL6IP5/GTRAP3-18. Interacts (via N-terminus) with SLC1A1/EAAC1; the interaction promotes cell surface expression of SLC1A1. Expressed in brain and spinal cord (at protein level). In the embryonic brain cortex, expressed in neurons but not in astrocytes (at protein level).

It localises to the endoplasmic reticulum membrane. It is found in the sarcoplasmic reticulum membrane. The protein resides in the cell membrane. Its subcellular location is the sarcolemma. The protein localises to the T-tubule. It localises to the cytoplasm. It is found in the myofibril. The protein resides in the sarcomere. Its subcellular location is the z line. The protein localises to the cytoskeleton. Inhibits amyloid precursor protein processing, probably by blocking BACE1 activity. Enhances trafficking of the glutamate transporter SLC1A1/EAAC1 from the endoplasmic reticulum to the cell surface. Plays a role in the translocation of SLC2A4/GLUT4 from intracellular membranes to the cell membrane which facilitates the uptake of glucose into the cell. In Rattus norvegicus (Rat), this protein is Reticulon-2.